Reading from the N-terminus, the 175-residue chain is Glutamyl-tRNA(Gln) amidotransferase subunit C, mitochondrial (175 aa).

The protein belongs to the GatC family. As to quaternary structure, subunit of the heterotrimeric GatCAB amidotransferase (AdT) complex, composed of A, B and C subunits.

It is found in the mitochondrion. The catalysed reaction is L-glutamyl-tRNA(Gln) + L-glutamine + ATP + H2O = L-glutaminyl-tRNA(Gln) + L-glutamate + ADP + phosphate + H(+). Functionally, allows the formation of correctly charged Gln-tRNA(Gln) through the transamidation of misacylated Glu-tRNA(Gln) in the mitochondria. The reaction takes place in the presence of glutamine and ATP through an activated gamma-phospho-Glu-tRNA(Gln). The protein is Glutamyl-tRNA(Gln) amidotransferase subunit C, mitochondrial of Caenorhabditis elegans.